The following is a 530-amino-acid chain: Membrane protein insertase YidC (530 aa).

The next 4 helical transmembrane spans lie at 5–25 (VVIAVILSIVVLYAFSYMFPP), 348–368 (YGLAIIIITIILKVLFFPLTH), 418–438 (LPMLVQIPVFFALYKALMFSI), and 492–512 (PVVFTFMFLNFPAGLVLYWLI).

This sequence belongs to the OXA1/ALB3/YidC family. Type 1 subfamily. Interacts with the Sec translocase complex via SecD. Specifically interacts with transmembrane segments of nascent integral membrane proteins during membrane integration.

The protein localises to the cell inner membrane. Functionally, required for the insertion and/or proper folding and/or complex formation of integral membrane proteins into the membrane. Involved in integration of membrane proteins that insert both dependently and independently of the Sec translocase complex, as well as at least some lipoproteins. Aids folding of multispanning membrane proteins. This is Membrane protein insertase YidC from Geotalea daltonii (strain DSM 22248 / JCM 15807 / FRC-32) (Geobacter daltonii).